A 1143-amino-acid chain; its full sequence is uncharacterized protein (1143 aa).

An N-terminal signal peptide occupies residues 1–20 (MKLLLLALILVLSNINLISG). Residues 21-1121 (NGLVWPHPRL…PAAGGEDSSA (1101 aa)) are Extracellular-facing. Residues 177–203 (NSGGSWSSGGSGNSGGGWSSGGSGNSG) are compositionally biased toward gly residues. Positions 177 to 1120 (NSGGSWSSGG…EPAAGGEDSS (944 aa)) are disordered. The segment covering 222–236 (SSGGWTSGSHSSGSW) has biased composition (low complexity). Gly residues predominate over residues 237-283 (SSGGGSGSSSGGQSSGSWSSGGGSSSGGHSSGSWSSGGGSSAGGGSS). The span at 284–296 (SGSHSSGSWSSGG) shows a compositional bias: low complexity. Positions 297 to 330 (SSSGGQSSGSWSSGGGSSSGGQSSGSWSSGGGSS) are enriched in gly residues. The segment covering 331–368 (SGSHSSGSWSSGGSSSGSHSSGSWSSGGSSSSSGNSGW) has biased composition (low complexity). Over residues 374–392 (GNTGGNTGGNTGGNTGGQS) the composition is skewed to gly residues. The span at 393–403 (SGNSGWMTASG) shows a compositional bias: low complexity. Gly residues-rich tracts occupy residues 404–418 (GNTG…GGQS) and 430–444 (GNTG…GGQS). Low complexity-rich tracts occupy residues 445-498 (SGSS…TSSG) and 506-541 (GSSS…SSGD). Gly residues-rich tracts occupy residues 555–573 (GNTG…GGNS), 580–596 (GNSG…GGNS), 604–622 (GNTG…GGNS), 629–783 (GNSG…GGNS), 790–843 (GNSG…GGAS), and 851–905 (GNSG…GGNS). Residues 906–1059 (GAATGANSGA…GGNGASGAAN (154 aa)) show a composition bias toward low complexity. Residues 1062 to 1078 (SIVTPNDQNVSPLSNSD) show a composition bias toward polar residues. Positions 1094-1114 (PTSRAPTVTPTPTSSAEEPAA) are enriched in low complexity. A helical transmembrane segment spans residues 1122–1142 (ISKYSIQSFGIFVLSMIIYLV). Position 1143 (I1143) is a topological domain, cytoplasmic.

Its subcellular location is the membrane. This is an uncharacterized protein from Dictyostelium discoideum (Social amoeba).